The chain runs to 825 residues: Arabinolytic transcriptional activator araR (825 aa).

Polar residues predominate over residues M1–D17. Residues M1–W28 form a disordered region. Positions C35 to C61 form a DNA-binding region, zn(2)-C6 fungal-type. The interval S117 to P152 is disordered.

It belongs to the xlnR/xlr1 family. araR subfamily.

Its subcellular location is the nucleus. Transcriptional activator of the arabinanolytic system. Involved in the regulation of extracellular arabinanolytic genes and in the regulation of the intracellular activities of L-arabinose catabolic genes in the pentose catabolic pathway (PCP) in response to the presence of L-arabinose. The sequence is that of Arabinolytic transcriptional activator araR from Emericella nidulans (strain FGSC A4 / ATCC 38163 / CBS 112.46 / NRRL 194 / M139) (Aspergillus nidulans).